We begin with the raw amino-acid sequence, 64 residues long: Probable spore germination protein GerPD (64 aa).

Required for the formation of functionally normal spores. Could be involved in the establishment of normal spore coat structure and/or permeability, which allows the access of germinants to their receptor. This chain is Probable spore germination protein GerPD (gerPD), found in Bacillus cereus.